The chain runs to 623 residues: Ciliated left-right organizer metallopeptidase (623 aa).

An N-terminal signal peptide occupies residues 1-20 (MSFLLCIGILLLPWFPCVCG). Topologically, residues 21-578 (KCIFDQIQRS…LFLVSEAKIS (558 aa)) are extracellular. A Zn(2+)-binding site is contributed by histidine 249. Glutamate 250 is a catalytic residue. Zn(2+)-binding residues include histidine 253 and histidine 326. A helical membrane pass occupies residues 579 to 599 (LAAVLSLMAVFALLSAAVLLY). The Cytoplasmic segment spans residues 600–623 (RKNLSVRVHAASYRTPLPHILYRN).

The protein belongs to the peptidase M8 family. Zn(2+) is required as a cofactor. In terms of tissue distribution, expressed specifically in dorsal forerunner cells (DFCs) that form a ciliated Kupffer's vesicle later.

The protein localises to the membrane. Plays an essential role for patterning the left-right axis. Requires solely on the left side, downstream of the leftward flow, but upstream of dand5, a nodal inhibitor involved in left-right patterning. This is Ciliated left-right organizer metallopeptidase (cirop) from Danio rerio (Zebrafish).